The following is a 446-amino-acid chain: RUN domain-containing protein 3A (446 aa).

Positions 1–298 are interaction with RAP2A; it reads METSFVQTTM…LQLQLEEAAA (298 aa). The RUN domain occupies 52–189; sequence DDSSEEFVNF…IDFSFCLKGE (138 aa). Thr215 carries the post-translational modification Phosphothreonine. Positions 216-239 are disordered; it reads DEEERHSAESSTSEDNSPEHPYLP. Ser232 carries the phosphoserine modification. Positions 267–322 form a coiled coil; it reads YLEELVRLRESQLKDLEAENRRLQLQLEEAAAQNQREKRELEGVILELQEQLTGLI. Residues 372–384 are compositionally biased toward polar residues; sequence PLSAEASLSSDSQ. Residues 372-404 form a disordered region; that stretch reads PLSAEASLSSDSQRLGEGTRDEEPWGPIGKDPT. Phosphoserine is present on residues Ser416 and Ser419.

It belongs to the RUNDC3 family. Interacts with the GTP-bound form of RAP2A.

In terms of biological role, may act as an effector of RAP2A in neuronal cells. The chain is RUN domain-containing protein 3A (RUNDC3A) from Pongo abelii (Sumatran orangutan).